Consider the following 510-residue polypeptide: Mitogen-activated protein kinase 9 (510 aa).

The Protein kinase domain occupies Y23 to F314. ATP contacts are provided by residues I29 to V37 and K52. D149 serves as the catalytic Proton acceptor. At T185 the chain carries Phosphothreonine. Positions T185–Y187 match the TXY motif. Residue Y187 is modified to Phosphotyrosine. A Phosphothreonine modification is found at T190. Residues N393–T461 are disordered. Residues L410–N431 show a composition bias toward basic and acidic residues. Over residues S433–T461 the composition is skewed to polar residues.

It belongs to the protein kinase superfamily. CMGC Ser/Thr protein kinase family. MAP kinase subfamily. Dually phosphorylated on Thr-185 and Tyr-187, which activates the enzyme.

The enzyme catalyses L-seryl-[protein] + ATP = O-phospho-L-seryl-[protein] + ADP + H(+). The catalysed reaction is L-threonyl-[protein] + ATP = O-phospho-L-threonyl-[protein] + ADP + H(+). Its activity is regulated as follows. Activated by threonine and tyrosine phosphorylation. This is Mitogen-activated protein kinase 9 (MPK9) from Arabidopsis thaliana (Mouse-ear cress).